Consider the following 178-residue polypeptide: MGDKKSPVAVGMTVLPPNQENFVDAGSTTLMNKPGEPIFKLAINLTNKNHSHIAIEDRAHQSSRLQVQKVEFKCTEDRKPISVNLKLHNPTAVTVSYKVRCTSADIFRVQPPLGFVKPSETVSIVIWYQNQDKKDAISKNHYFAFYHTNSDGRTARELWANSKVEGVRRLPASFLSTK.

In terms of domain architecture, MSP spans 52 to 177; it reads HIAIEDRAHQ…RRLPASFLST (126 aa).

This is an uncharacterized protein from Caenorhabditis elegans.